The following is a 421-amino-acid chain: Gamma-glutamyl phosphate reductase (421 aa).

This sequence belongs to the gamma-glutamyl phosphate reductase family.

The protein resides in the cytoplasm. It carries out the reaction L-glutamate 5-semialdehyde + phosphate + NADP(+) = L-glutamyl 5-phosphate + NADPH + H(+). It participates in amino-acid biosynthesis; L-proline biosynthesis; L-glutamate 5-semialdehyde from L-glutamate: step 2/2. Catalyzes the NADPH-dependent reduction of L-glutamate 5-phosphate into L-glutamate 5-semialdehyde and phosphate. The product spontaneously undergoes cyclization to form 1-pyrroline-5-carboxylate. The protein is Gamma-glutamyl phosphate reductase of Dinoroseobacter shibae (strain DSM 16493 / NCIMB 14021 / DFL 12).